We begin with the raw amino-acid sequence, 905 residues long: Protein translocase subunit SecA (905 aa).

Residues Gln-87, 105-109 (GEGKT), and Asp-512 each bind ATP. The interval 836-905 (DVDAVDEQRK…KKYKHCHGKL (70 aa)) is disordered. Residues 841–858 (DEQRKAADSAPREFRHEQ) are compositionally biased toward basic and acidic residues. 4 residues coordinate Zn(2+): Cys-890, Cys-892, Cys-901, and His-902. The span at 896–905 (KKYKHCHGKL) shows a compositional bias: basic residues.

This sequence belongs to the SecA family. As to quaternary structure, monomer and homodimer. Part of the essential Sec protein translocation apparatus which comprises SecA, SecYEG and auxiliary proteins SecDF-YajC and YidC. Requires Zn(2+) as cofactor.

Its subcellular location is the cell inner membrane. It is found in the cytoplasm. It catalyses the reaction ATP + H2O + cellular proteinSide 1 = ADP + phosphate + cellular proteinSide 2.. Functionally, part of the Sec protein translocase complex. Interacts with the SecYEG preprotein conducting channel. Has a central role in coupling the hydrolysis of ATP to the transfer of proteins into and across the cell membrane, serving both as a receptor for the preprotein-SecB complex and as an ATP-driven molecular motor driving the stepwise translocation of polypeptide chains across the membrane. This chain is Protein translocase subunit SecA, found in Idiomarina loihiensis (strain ATCC BAA-735 / DSM 15497 / L2-TR).